The following is a 221-amino-acid chain: Ubiquitin-conjugating enzyme E2 S (221 aa).

The UBC core domain maps to 11-157; that stretch reads QVLRLVYKEV…AHLLTEIHAM (147 aa). C95 serves as the catalytic Glycyl thioester intermediate. A disordered region spans residues 158–221; sequence GGTSGAPQEP…TDKKRALRRL (64 aa). The segment covering 193–206 has biased composition (low complexity); sequence GTGTNNSNISNTNI. A compositionally biased stretch (basic residues) spans 208–221; sequence AKKKTDKKRALRRL.

The protein belongs to the ubiquitin-conjugating enzyme family.

It carries out the reaction S-ubiquitinyl-[E1 ubiquitin-activating enzyme]-L-cysteine + [E2 ubiquitin-conjugating enzyme]-L-cysteine = [E1 ubiquitin-activating enzyme]-L-cysteine + S-ubiquitinyl-[E2 ubiquitin-conjugating enzyme]-L-cysteine.. The protein operates within protein modification; protein ubiquitination. Its function is as follows. Catalyzes the covalent attachment of ubiquitin to other proteins. Acts as an essential factor of the anaphase promoting complex/cyclosome (APC/C), a cell cycle-regulated ubiquitin ligase that controls progression through mitosis. Acts by specifically elongating 'Lys-11'-linked polyubiquitin chains initiated by the E2 enzyme ube2c/ubch10 on APC/C substrates, enhancing the degradation of APC/C substrates by the proteasome and promoting mitotic exit. The sequence is that of Ubiquitin-conjugating enzyme E2 S (ube2s) from Danio rerio (Zebrafish).